The primary structure comprises 526 residues: Phosphoenolpyruvate carboxylase (526 aa).

It belongs to the PEPCase type 2 family. As to quaternary structure, homotetramer. Requires Mg(2+) as cofactor.

It carries out the reaction oxaloacetate + phosphate = phosphoenolpyruvate + hydrogencarbonate. Functionally, catalyzes the irreversible beta-carboxylation of phosphoenolpyruvate (PEP) to form oxaloacetate (OAA), a four-carbon dicarboxylic acid source for the tricarboxylic acid cycle. The polypeptide is Phosphoenolpyruvate carboxylase (Methanosarcina acetivorans (strain ATCC 35395 / DSM 2834 / JCM 12185 / C2A)).